Reading from the N-terminus, the 227-residue chain is ATP-dependent dethiobiotin synthetase BioD (227 aa).

Residue 13 to 18 (DIGKTY) coordinates ATP. Mg(2+) is bound at residue Thr17. Lys38 is a catalytic residue. Ser42 lines the substrate pocket. ATP contacts are provided by residues Asp55, 116-119 (EGSG), and 179-180 (NN). The Mg(2+) site is built by Asp55 and Glu116.

Belongs to the dethiobiotin synthetase family. Homodimer. Mg(2+) is required as a cofactor.

It localises to the cytoplasm. It carries out the reaction (7R,8S)-7,8-diammoniononanoate + CO2 + ATP = (4R,5S)-dethiobiotin + ADP + phosphate + 3 H(+). The protein operates within cofactor biosynthesis; biotin biosynthesis; biotin from 7,8-diaminononanoate: step 1/2. In terms of biological role, catalyzes a mechanistically unusual reaction, the ATP-dependent insertion of CO2 between the N7 and N8 nitrogen atoms of 7,8-diaminopelargonic acid (DAPA, also called 7,8-diammoniononanoate) to form a ureido ring. This chain is ATP-dependent dethiobiotin synthetase BioD, found in Clostridium botulinum (strain Kyoto / Type A2).